Here is a 359-residue protein sequence, read N- to C-terminus: MAGPPGDDIFRATLAAVAPGTPFRDGLERILRGHTGALIVLGHDKVVEGLCTGGFELDVEFSATRLRELAKMDGAIVLSSDLARIVRAAVHLVPDPTVPTEESGTRHRTAERVAKQTGFPVISVSQSMHIIALYVAGRRYVLDGAAAILSRANQALATLERYKLRLDEVAGTLSALEIEDLVTVRDAISVSQRLEMVRRIADEIESYVVELGTDGRLLSLQLEELMAGVETERELTVRDYLPVGSRAGNAAQVLAELSAMSPTDLLDLTVIARVIGFSGGADILDRQISPRGYRMLAKVPRLPRMVVDRLVDHFSTLQKLLAAGVDDLQAVDGVGETRARAVREGLSRLAESSILERYV.

A DAC domain is found at 7-145; it reads DDIFRATLAA…AGRRYVLDGA (139 aa). ATP-binding positions include G74, L92, and 105-109; that span reads TRHRT.

The protein belongs to the DisA family. In terms of assembly, homooctamer. The cofactor is Mg(2+).

The enzyme catalyses 2 ATP = 3',3'-c-di-AMP + 2 diphosphate. Functionally, participates in a DNA-damage check-point that is active prior to asymmetric division when DNA is damaged. DisA forms globular foci that rapidly scan along the chromosomes during sporulation, searching for lesions. When a lesion is present, DisA pauses at the lesion site. This triggers a cellular response that culminates in a temporary block in sporulation initiation. Its function is as follows. Also has diadenylate cyclase activity, catalyzing the condensation of 2 ATP molecules into cyclic di-AMP (c-di-AMP). c-di-AMP acts as a signaling molecule that couples DNA integrity with progression of sporulation. The rise in c-di-AMP level generated by DisA while scanning the chromosome, operates as a positive signal that advances sporulation; upon encountering a lesion, the DisA focus arrests at the damaged site and halts c-di-AMP synthesis. This Parafrankia sp. (strain EAN1pec) protein is DNA integrity scanning protein DisA.